Here is a 1097-residue protein sequence, read N- to C-terminus: DNA-directed RNA polymerase subunit beta (1097 aa).

This sequence belongs to the RNA polymerase beta chain family. As to quaternary structure, in plastids the minimal PEP RNA polymerase catalytic core is composed of four subunits: alpha, beta, beta', and beta''. When a (nuclear-encoded) sigma factor is associated with the core the holoenzyme is formed, which can initiate transcription.

It localises to the plastid. Its subcellular location is the chloroplast. The enzyme catalyses RNA(n) + a ribonucleoside 5'-triphosphate = RNA(n+1) + diphosphate. Functionally, DNA-dependent RNA polymerase catalyzes the transcription of DNA into RNA using the four ribonucleoside triphosphates as substrates. The protein is DNA-directed RNA polymerase subunit beta of Rhodomonas salina (Cryptomonas salina).